We begin with the raw amino-acid sequence, 309 residues long: Protein FdhE homolog (309 aa).

This sequence belongs to the FdhE family.

The protein localises to the cytoplasm. Necessary for formate dehydrogenase activity. In Pectobacterium atrosepticum (strain SCRI 1043 / ATCC BAA-672) (Erwinia carotovora subsp. atroseptica), this protein is Protein FdhE homolog.